The chain runs to 433 residues: 2,2-dialkylglycine decarboxylase (433 aa).

An N6-(pyridoxal phosphate)lysine modification is found at Lys272.

It belongs to the class-III pyridoxal-phosphate-dependent aminotransferase family. As to quaternary structure, homotetramer. The cofactor is pyridoxal 5'-phosphate.

The catalysed reaction is 2,2-dialkylglycine + pyruvate + H(+) = dialkyl ketone + L-alanine + CO2. Its function is as follows. The dialkylglycine decarboxylase is of interest because it normally catalyzes both decarboxylation and amino transfer. It may be more properly described as a decarboxylating aminotransferase rather than an aminotransferring decarboxylase. In Burkholderia cepacia (Pseudomonas cepacia), this protein is 2,2-dialkylglycine decarboxylase (dgdA).